We begin with the raw amino-acid sequence, 377 residues long: Queuine tRNA-ribosyltransferase (377 aa).

The active-site Proton acceptor is Asp93. Substrate contacts are provided by residues 93 to 97 (DSGGF), Asp147, Gln191, and Gly218. Residues 249-255 (GVGTPLD) form an RNA binding region. Residue Asp268 is the Nucleophile of the active site. The tract at residues 273-277 (TRNAR) is RNA binding; important for wobble base 34 recognition. Zn(2+)-binding residues include Cys306, Cys308, Cys311, and His337.

This sequence belongs to the queuine tRNA-ribosyltransferase family. Homodimer. Within each dimer, one monomer is responsible for RNA recognition and catalysis, while the other monomer binds to the replacement base PreQ1. Zn(2+) serves as cofactor.

It catalyses the reaction 7-aminomethyl-7-carbaguanine + guanosine(34) in tRNA = 7-aminomethyl-7-carbaguanosine(34) in tRNA + guanine. Its pathway is tRNA modification; tRNA-queuosine biosynthesis. Its function is as follows. Catalyzes the base-exchange of a guanine (G) residue with the queuine precursor 7-aminomethyl-7-deazaguanine (PreQ1) at position 34 (anticodon wobble position) in tRNAs with GU(N) anticodons (tRNA-Asp, -Asn, -His and -Tyr). Catalysis occurs through a double-displacement mechanism. The nucleophile active site attacks the C1' of nucleotide 34 to detach the guanine base from the RNA, forming a covalent enzyme-RNA intermediate. The proton acceptor active site deprotonates the incoming PreQ1, allowing a nucleophilic attack on the C1' of the ribose to form the product. After dissociation, two additional enzymatic reactions on the tRNA convert PreQ1 to queuine (Q), resulting in the hypermodified nucleoside queuosine (7-(((4,5-cis-dihydroxy-2-cyclopenten-1-yl)amino)methyl)-7-deazaguanosine). This chain is Queuine tRNA-ribosyltransferase, found in Oleidesulfovibrio alaskensis (strain ATCC BAA-1058 / DSM 17464 / G20) (Desulfovibrio alaskensis).